Reading from the N-terminus, the 697-residue chain is MCKSLRYCFSHCLYLAMTRLEEVNREVNMHSSVRYLGYLARINLLVAICLGLYVRWEKTANSLILVIFILGLFVLGIASILYYYFSMEAASLSLSNLWFGFLLGLLCFLDNSSFKNDVKEESTKYLLLTSIVLRILCSLVERISGYVRHRPTLLTTVEFLELVGFAIASTTMLVEKSLSVILLVVALAMLIIDLRMKSFLAIPNLVIFAVLLFFSSLETPKNPIAFACFFICLITDPFLDIYFSGLSVTERWKPFLYRGRICRRLSVVFAGMIELTFFILSAFKLRDTHLWYFVIPGFSIFGIFWMICHIIFLLTLWGFHTKLNDCHKVYFTHRTDYNSLDRIMASKGMRHFCLISEQLVFFSLLATAILGAVSWQPTNGIFLSMFLIVLPLESMAHGLFHELGNCLGGTSVGYAIVIPTNFCSPDGQPTLLPPEHVQELNLRSTGMLNAIQRFFAYHMIETYGCDYSTSGLSFDTLHSKLKAFLELRTVDGPRHDTYILYYSGHTHGTGEWALAGGDTLRLDTLIEWWREKNGSFCSRLIIVLDSENSTPWVKEVRKINDQYIAVQGAELIKTVDIEEADPPQLGDFTKDWVEYNCNSSNNICWTEKGRTVKAVYGVSKRWSDYTLHLPTGSDVAKHWMLHFPRITYPLVHLANWLCGLNLFWICKTCFRCLKRLKMSWFLPTVLDTGQGFKLVKS.

Transmembrane regions (helical) follow at residues 36-56, 63-83, and 89-109; these read LGYL…YVRW, LILV…ILYY, and AASL…LCFL. A glycan (N-linked (GlcNAc...) asparagine) is linked at Asn-111. Transmembrane regions (helical) follow at residues 172–192, 199–219, 223–243, 265–285, 293–313, 352–372, and 380–400; these read MLVE…MLII, FLAI…SLET, PIAF…DIYF, LSVV…AFKL, FVIP…IIFL, FCLI…ILGA, and GIFL…HGLF. N-linked (GlcNAc...) asparagine glycosylation is found at Asn-533 and Asn-598. A helical transmembrane segment spans residues 646 to 666; that stretch reads ITYPLVHLANWLCGLNLFWIC.

This sequence belongs to the TMEM168 family.

It localises to the nucleus membrane. Plays a key role in maintaining the cardiac electrical stability by modulating cell surface expression of SCN5A. May play a role in the modulation of anxiety behavior by regulating GABAergic neuronal system in the nucleus accumbens. The polypeptide is Transmembrane protein 168 (Homo sapiens (Human)).